A 301-amino-acid chain; its full sequence is GTP cyclohydrolase FolE2 (301 aa).

It belongs to the GTP cyclohydrolase IV family.

The catalysed reaction is GTP + H2O = 7,8-dihydroneopterin 3'-triphosphate + formate + H(+). The protein operates within cofactor biosynthesis; 7,8-dihydroneopterin triphosphate biosynthesis; 7,8-dihydroneopterin triphosphate from GTP: step 1/1. Its function is as follows. Converts GTP to 7,8-dihydroneopterin triphosphate. The sequence is that of GTP cyclohydrolase FolE2 from Exiguobacterium sibiricum (strain DSM 17290 / CCUG 55495 / CIP 109462 / JCM 13490 / 255-15).